Reading from the N-terminus, the 165-residue chain is Ubiquitin-conjugating enzyme E2 G2 (165 aa).

An N-acetylalanine modification is found at alanine 2. Residues 4–164 (TALKRLMAEY…AKQIVQKSLG (161 aa)) enclose the UBC core domain. The Glycyl thioester intermediate role is filled by cysteine 89.

It belongs to the ubiquitin-conjugating enzyme family. In terms of assembly, interacts with AUP1 (via C-terminus); the interaction recruits UBE2G2 to lipid droplets. Interacts with ubiquitin ligases AMFR/gp78 and RNF139/TRC8; recruitment to lipid droplets by AUP1 facilitates interaction of UBE2G2 with AMFR and RNF139, leading to sterol-induced ubiquitination of 3-hydroxy-3-methylglutaryl coenzyme A reductase and its subsequent proteasomal degradation.

The protein localises to the endoplasmic reticulum. It localises to the lipid droplet. It carries out the reaction S-ubiquitinyl-[E1 ubiquitin-activating enzyme]-L-cysteine + [E2 ubiquitin-conjugating enzyme]-L-cysteine = [E1 ubiquitin-activating enzyme]-L-cysteine + S-ubiquitinyl-[E2 ubiquitin-conjugating enzyme]-L-cysteine.. The protein operates within protein modification; protein ubiquitination. Its function is as follows. Accepts ubiquitin from the E1 complex and catalyzes its covalent attachment to other proteins. In vitro catalyzes 'Lys-48'-linked polyubiquitination. Involved in endoplasmic reticulum-associated degradation (ERAD). Required for sterol-induced ubiquitination of 3-hydroxy-3-methylglutaryl coenzyme A reductase and its subsequent proteasomal degradation. The protein is Ubiquitin-conjugating enzyme E2 G2 of Bos taurus (Bovine).